The following is a 782-amino-acid chain: MFSPSKFRKQVNESESVSNCESTTSNSRRILDQHAGLPISSAFRTEASDIGHHFSTKMYFKILSPNNVFALMGDNEFKTSFKIFTIFEPTSTPNGKIQSLITISYKINNVLFKMEKEIFIEKVNIFSLELHIFNFQSTNRSNPASESIHQLDLSSEALVTSTLNIRGNKITTTLRPRTSPYKRAGDASMSREDLRSPDSVSTFTTVLHVFHKVFQVAATYTIRENRSERQTKVKLESLERRLKANEKARKEIEAEAEKWKDRATRNSKRLPELELELAETVQAKEEWQVKSQEMEIQNKQLVEELNEVQKKLEEIENSQKTFHQKVVSTLNLDEEYFQNPDEEQDGSLSQFNMDVLEQEIVKYQEKCISLKQENEILKEKLQQLSSSLTVNQNHVSTLMDHLEINKEQSREIQGICKKEIAIRQDHENRINHDVTLLNSLINEQKMELEMLKAEIRCLRSYSQEMSQSNKNNIILLKSAETERKSLLETLTVLLNSEEEATENNVKRTIRDLVRERDTEQTKRFEAEKAASNAEGVLLEQAKQQRNALFRARVSEEEYSKSMEKIEELEQELLASDLERKNLEHKIASLENCISKVSQLLNVNVGGVFDAIFDRIEELIAQESVYRVVVNENRLISENIFRGLQSVRKDFQSGKSGGGSDKKQPASPVAAAAKIIQERHTLKTIDKMDKLNKDLLATMTIETLKAADIEKTNLKKRMNEQDARIRQLEREKKEGERIRSIIAKWEKRNIPKTEKSSPMKKVPPIENFRAKSQTSITGLSPVL.

Disordered regions lie at residues 1 to 25 (MFSP…STTS) and 175 to 195 (RPRT…EDLR). Positions 13 to 25 (ESESVSNCESTTS) are enriched in low complexity. Residues 183–195 (RAGDASMSREDLR) are compositionally biased toward basic and acidic residues. Coiled coils occupy residues 223–331 (RENR…STLN), 348–398 (LSQF…VSTL), 428–601 (NRIN…QLLN), and 699–743 (TIET…IIAK). The disordered stretch occupies residues 748–782 (NIPKTEKSSPMKKVPPIENFRAKSQTSITGLSPVL). Residues 769–782 (AKSQTSITGLSPVL) show a composition bias toward polar residues.

This is an uncharacterized protein from Caenorhabditis elegans.